We begin with the raw amino-acid sequence, 396 residues long: Elongation factor Tu (396 aa).

In terms of domain architecture, tr-type G spans 10–206 (KPHVNVGTIG…ALDSYIPTPE (197 aa)). Positions 19–26 (GHVDHGKT) are G1. 19 to 26 (GHVDHGKT) contacts GTP. Threonine 26 contributes to the Mg(2+) binding site. Residues 60–64 (GITIN) are G2. Residues 81–84 (DCPG) are G3. GTP contacts are provided by residues 81 to 85 (DCPGH) and 136 to 139 (NKCD). Positions 136 to 139 (NKCD) are G4. The G5 stretch occupies residues 174–176 (SAK).

It belongs to the TRAFAC class translation factor GTPase superfamily. Classic translation factor GTPase family. EF-Tu/EF-1A subfamily. Monomer.

It is found in the cytoplasm. The catalysed reaction is GTP + H2O = GDP + phosphate + H(+). GTP hydrolase that promotes the GTP-dependent binding of aminoacyl-tRNA to the A-site of ribosomes during protein biosynthesis. The polypeptide is Elongation factor Tu (Methylibium petroleiphilum (strain ATCC BAA-1232 / LMG 22953 / PM1)).